A 296-amino-acid chain; its full sequence is Prostate androgen-regulated mucin-like protein 1 homolog (296 aa).

Residues 1–20 (MVCKVLIALCIFTAGLRVQG) form the signal peptide. Residues 21–244 (SPTVPLPVSL…EVENALSSGS (224 aa)) lie on the Extracellular side of the membrane. 2 N-linked (GlcNAc...) asparagine glycosylation sites follow: N61 and N95. The interval 72–220 (LTSQLPTDHR…SPQDTEPGKV (149 aa)) is disordered. Residues 78 to 95 (TDHREEAVTSPPLKRDVN) show a composition bias toward basic and acidic residues. The segment covering 96 to 110 (STDSSPAGFPSTSSD) has biased composition (polar residues). Residues 139–167 (LLSSQAPTSATTSPATSLSESLSASVTSS) show a composition bias toward low complexity. A compositionally biased stretch (polar residues) spans 168–177 (HNSTVANIQP). A glycan (N-linked (GlcNAc...) asparagine) is linked at N169. Over residues 206–217 (VPKEKSPQDTEP) the composition is skewed to basic and acidic residues. Residues 245–265 (IAAITVTVIAVVLLVFGGAAY) form a helical membrane-spanning segment. Over 266–296 (LKIRHSSYGRLLDDHDYGSWGNYNNPLYDDS) the chain is Cytoplasmic. S284 bears the Phosphoserine mark.

It belongs to the PARM family. Post-translationally, highly N-glycosylated and O-glycosylated.

It localises to the cell membrane. It is found in the golgi apparatus membrane. The protein resides in the endosome membrane. May regulate TLP1 expression and telomerase activity, thus enabling certain prostatic cells to resist apoptosis. This is Prostate androgen-regulated mucin-like protein 1 homolog (Parm1) from Mus musculus (Mouse).